We begin with the raw amino-acid sequence, 126 residues long: Large ribosomal subunit protein bL17 (126 aa).

Belongs to the bacterial ribosomal protein bL17 family. In terms of assembly, part of the 50S ribosomal subunit. Contacts protein L32.

This is Large ribosomal subunit protein bL17 from Xylella fastidiosa (strain M12).